The primary structure comprises 383 residues: MLKECIKIEGRAFLGGKVTRVKLGSGECKTLQLSNKYLILPGMVDIHVHFRDWGLSHKETLRGGAAAALAGGVVAVGDMPNTKPHIRTADLYKKRLEEGSALPIIYKVHMGIPQDLEELRAARPPTIKIYPEDVEAFGWGHIEKAAEACASLGCRLVLHCEDPAYFKEGERPPIAELACVERTRQMAFKTGVKIHLTHITLSQTAEAARGWATVDATPHHLLLDVENCKDSGLCHVNPRLRTPEMRKRLLAAFASGLVDIYATDHAPHTLEEKRSGAPPPGICSLDVALSLLLTLWKRGVVTLSDVVRLYSHRPARFFDLQIDVKKGYFTVVRLEEFTVRGEEFAGTCKHTPFEGFKAFGRVFATSVGGRIYFKDGDVYMINI.

Residues His-47 and His-49 each contribute to the Zn(2+) site. Substrate-binding positions include 49–51 (HFR) and Asn-81. Residues Lys-128, His-159, His-198, and Asp-264 each contribute to the Zn(2+) site. Lys-128 bears the N6-carboxylysine mark. Residue Asp-264 is part of the active site. Substrate-binding positions include His-268 and 280–281 (PG).

Belongs to the metallo-dependent hydrolases superfamily. DHOase family. Class I DHOase subfamily. It depends on Zn(2+) as a cofactor.

It carries out the reaction (S)-dihydroorotate + H2O = N-carbamoyl-L-aspartate + H(+). It functions in the pathway pyrimidine metabolism; UMP biosynthesis via de novo pathway; (S)-dihydroorotate from bicarbonate: step 3/3. In terms of biological role, catalyzes the reversible cyclization of carbamoyl aspartate to dihydroorotate. This chain is Dihydroorotase, found in Pyrobaculum aerophilum (strain ATCC 51768 / DSM 7523 / JCM 9630 / CIP 104966 / NBRC 100827 / IM2).